A 388-amino-acid polypeptide reads, in one-letter code: Probable nitrate transporter NarT (388 aa).

The next 12 helical transmembrane spans lie at 14–34 (TLSL…MPMI), 45–65 (ISIV…PFGY), 69–89 (IIGA…PIFL), 98–118 (MLML…VGVT), 139–159 (GNLG…AIGW), 161–181 (STVR…FFLG), 206–226 (YYLS…GIFL), 242–262 (GIRA…GGII), 276–296 (FLFM…ILFT), 297–317 (VGCL…FKLV), 330–350 (GIVS…ITYV), and 359–379 (LAFI…WHLS).

The protein belongs to the major facilitator superfamily. Nitrate/nitrite porter (TC 2.A.1.8) family.

The protein resides in the cell membrane. Functionally, probably required for nitrate uptake under anoxic conditions. Also possibly involved in excretion of nitrite produced by the dissimilatory reduction of nitrate. The chain is Probable nitrate transporter NarT (narT) from Staphylococcus carnosus (strain TM300).